The sequence spans 51 residues: Methionine aminopeptidase (51 aa).

It belongs to the peptidase M24A family. Methionine aminopeptidase type 1 subfamily. As to quaternary structure, monomer. The cofactor is Co(2+). Zn(2+) serves as cofactor. Mn(2+) is required as a cofactor. Requires Fe(2+) as cofactor.

The enzyme catalyses Release of N-terminal amino acids, preferentially methionine, from peptides and arylamides.. Functionally, removes the N-terminal methionine from nascent proteins. The N-terminal methionine is often cleaved when the second residue in the primary sequence is small and uncharged (Met-Ala-, Cys, Gly, Pro, Ser, Thr, or Val). Requires deformylation of the N(alpha)-formylated initiator methionine before it can be hydrolyzed. This is Methionine aminopeptidase (map) from Geobacillus stearothermophilus (Bacillus stearothermophilus).